The following is a 360-amino-acid chain: Transcription factor MYB39 (360 aa).

2 consecutive HTH myb-type domains span residues 10–62 (DKGV…MNYL) and 63–117 (RPDI…RKKL). 2 consecutive DNA-binding regions (H-T-H motif) follow at residues 38–62 (WRSLPKLAGLNRCGKSCRLRWMNYL) and 90–113 (WSKIAGHLPGRTDNEIKNYWNTHM). The segment at 299 to 324 (PSTGSVSVSPETTSLNHPSTAQHSSG) is disordered.

It localises to the nucleus. This is Transcription factor MYB39 (MYB39) from Arabidopsis thaliana (Mouse-ear cress).